Here is a 165-residue protein sequence, read N- to C-terminus: Interferon gamma (165 aa).

The first 23 residues, Met1–Cys23, serve as a signal peptide directing secretion. Gln24 is modified (pyrrolidone carboxylic acid). 2 N-linked (GlcNAc...) asparagine glycosylation sites follow: Asn48 and Asn120.

This sequence belongs to the type II (or gamma) interferon family. In terms of assembly, homodimer. Interacts with IFNGR1 (via extracellular domain); this interaction promotes IFNGR1 dimerization.

It is found in the secreted. Its function is as follows. Type II interferon produced by immune cells such as T-cells and NK cells that plays crucial roles in antimicrobial, antiviral, and antitumor responses by activating effector immune cells and enhancing antigen presentation. Primarily signals through the JAK-STAT pathway after interaction with its receptor IFNGR1 to affect gene regulation. Upon IFNG binding, IFNGR1 intracellular domain opens out to allow association of downstream signaling components JAK2, JAK1 and STAT1, leading to STAT1 activation, nuclear translocation and transcription of IFNG-regulated genes. Many of the induced genes are transcription factors such as IRF1 that are able to further drive regulation of a next wave of transcription. Plays a role in class I antigen presentation pathway by inducing a replacement of catalytic proteasome subunits with immunoproteasome subunits. In turn, increases the quantity, quality, and repertoire of peptides for class I MHC loading. Increases the efficiency of peptide generation also by inducing the expression of activator PA28 that associates with the proteasome and alters its proteolytic cleavage preference. Up-regulates as well MHC II complexes on the cell surface by promoting expression of several key molecules such as cathepsins B/CTSB, H/CTSH, and L/CTSL. Participates in the regulation of hematopoietic stem cells during development and under homeostatic conditions by affecting their development, quiescence, and differentiation. In Papio anubis (Olive baboon), this protein is Interferon gamma (IFNG).